The chain runs to 386 residues: Nucleosome assembly protein 1-like 4 (386 aa).

The interval 1–29 is disordered; the sequence is MADNSFSDGVPSDSLEAAKNASNTEKLTD. Alanine 2 is subject to N-acetylalanine. Phosphoserine occurs at positions 5, 7, and 12. Polar residues predominate over residues 20–29; that stretch reads NASNTEKLTD. Position 49 is a phosphoserine (serine 49). Threonine 51 is modified (phosphothreonine). 2 positions are modified to phosphoserine: serine 53 and serine 54. Threonine 58 bears the Phosphothreonine mark. Lysine 105 is subject to N6-acetyllysine. At serine 125 the chain carries Phosphoserine. Position 146 is an N6-acetyllysine (lysine 146). A Nuclear localization signal motif is present at residues 265 to 271; it reads IKKKQKH. A Phosphoserine modification is found at serine 304. Residues 339 to 370 show a composition bias toward acidic residues; the sequence is AIEDDDNFEEGEEGEEEELEGDEEAEDDDDAE. Residues 339 to 386 form a disordered region; the sequence is AIEDDDNFEEGEEGEEEELEGDEEAEDDDDAEINPKKEPSQPSECKQQ.

It belongs to the nucleosome assembly protein (NAP) family. In terms of assembly, interacts with core (H2A, H2B, H3, H4) and linker (H1) histones. Polyglutamylated and polyglycylated. These 2 modifications occur exclusively on glutamate residues and result in either polyglutamate or polyglycine chains on the gamma-carboxyl group. Both modifications can coexist on the same protein on adjacent residues, and lowering polyglycylation levels increases polyglutamylation, and reciprocally. Polyglutamylated by TTLL4. Post-translationally, phosphorylated at the G0/G1 boundary but it is not phosphorylated in S-phase. Phosphorylated protein remains in the cytoplasm in a complex with histones during the G0/G1 transition, whereas dephosphorylation triggers its transport into the nucleus at the G1/S-boundary.

It is found in the nucleus. The protein localises to the cytoplasm. Acts as a histone chaperone in nucleosome assembly. The protein is Nucleosome assembly protein 1-like 4 (NAP1L4) of Bos taurus (Bovine).